Here is a 302-residue protein sequence, read N- to C-terminus: Sulfate adenylyltransferase subunit 2 (302 aa).

This sequence belongs to the PAPS reductase family. CysD subfamily. As to quaternary structure, heterodimer composed of CysD, the smaller subunit, and CysN.

The enzyme catalyses sulfate + ATP + H(+) = adenosine 5'-phosphosulfate + diphosphate. It functions in the pathway sulfur metabolism; hydrogen sulfide biosynthesis; sulfite from sulfate: step 1/3. Its function is as follows. With CysN forms the ATP sulfurylase (ATPS) that catalyzes the adenylation of sulfate producing adenosine 5'-phosphosulfate (APS) and diphosphate, the first enzymatic step in sulfur assimilation pathway. APS synthesis involves the formation of a high-energy phosphoric-sulfuric acid anhydride bond driven by GTP hydrolysis by CysN coupled to ATP hydrolysis by CysD. In Xanthomonas oryzae pv. oryzae (strain MAFF 311018), this protein is Sulfate adenylyltransferase subunit 2.